Reading from the N-terminus, the 105-residue chain is Putative membrane protein insertion efficiency factor (105 aa).

The protein belongs to the UPF0161 family.

It is found in the cell inner membrane. Its function is as follows. Could be involved in insertion of integral membrane proteins into the membrane. In Nitratidesulfovibrio vulgaris (strain DSM 19637 / Miyazaki F) (Desulfovibrio vulgaris), this protein is Putative membrane protein insertion efficiency factor.